The primary structure comprises 252 residues: Probable transcriptional regulatory protein RF_0799 (252 aa).

Residues 1–21 (MAGHSKFKNIQHRKGAQDKKR) form a disordered region.

It belongs to the TACO1 family.

The protein resides in the cytoplasm. This Rickettsia felis (strain ATCC VR-1525 / URRWXCal2) (Rickettsia azadi) protein is Probable transcriptional regulatory protein RF_0799.